Consider the following 303-residue polypeptide: MMQNLARDIDAILITGPTASGKSALAVKLAQRHGGVVINADSMQVYGTLKVLTARPDQSEMGGVEHFLYGHIPPGRAYSTGVWLREAEALVARLGKEGRLPVFVGGTGLYFKALTGGLSDMPEIPLETRKRLRTRLTEEGAEALHGELSARDPETAGRVRPSDGQRIVRALEIIEATGRPIGSYQQSRGPVIIDPARAQKIVVLPERPVLHGRIDRRFETMLARGAVEEVRALLALRLPPEMPVMKAIGVPQIAAMLKGEMSEKQVIEAGAAATRQYAKRQMTWFRNQLDETWQRIEDPDALG.

16–23 (GPTASGKS) lines the ATP pocket. 18-23 (TASGKS) provides a ligand contact to substrate. Positions 41 to 44 (DSMQ) are interaction with substrate tRNA. Residues 141–161 (AEALHGELSARDPETAGRVRP) are disordered. Positions 165-169 (QRIVR) are interaction with substrate tRNA.

Belongs to the IPP transferase family. In terms of assembly, monomer. Mg(2+) serves as cofactor.

The enzyme catalyses adenosine(37) in tRNA + dimethylallyl diphosphate = N(6)-dimethylallyladenosine(37) in tRNA + diphosphate. In terms of biological role, catalyzes the transfer of a dimethylallyl group onto the adenine at position 37 in tRNAs that read codons beginning with uridine, leading to the formation of N6-(dimethylallyl)adenosine (i(6)A). The sequence is that of tRNA dimethylallyltransferase from Rhizobium meliloti (strain 1021) (Ensifer meliloti).